A 132-amino-acid polypeptide reads, in one-letter code: UPF0047 protein YugU (132 aa).

Belongs to the UPF0047 family.

The sequence is that of UPF0047 protein YugU (yugU) from Bacillus subtilis (strain 168).